Reading from the N-terminus, the 399-residue chain is Stearoyl-[acyl-carrier-protein] 9-desaturase, chloroplastic (399 aa).

A compositionally biased stretch (polar residues) spans 1–12 (MALNLNPVSTPF). A chloroplast-targeting transit peptide spans 1-35 (MALNLNPVSTPFQCRRLPSFSPRQTPSRRSPKFFM). A disordered region spans residues 1–57 (MALNLNPVSTPFQCRRLPSFSPRQTPSRRSPKFFMASTLSSSSPKEAESLKKPFSPP). Residues E141, E179, H182, E232, E265, and H268 each coordinate Fe cation.

It belongs to the fatty acid desaturase type 2 family. Homodimer. The cofactor is Fe(2+).

It is found in the plastid. The protein localises to the chloroplast. It catalyses the reaction octadecanoyl-[ACP] + 2 reduced [2Fe-2S]-[ferredoxin] + O2 + 2 H(+) = (9Z)-octadecenoyl-[ACP] + 2 oxidized [2Fe-2S]-[ferredoxin] + 2 H2O. It participates in lipid metabolism; fatty acid metabolism. Converts stearoyl-ACP to oleoyl-ACP by introduction of a cis double bond between carbons 9 and 10 of the acyl chain. The sequence is that of Stearoyl-[acyl-carrier-protein] 9-desaturase, chloroplastic from Spinacia oleracea (Spinach).